The sequence spans 309 residues: MPIKIPENLPAAEVLREENIFIMTEERAAHQDIRPLEIVILNLMPNKIVTETQLLRLLGNTPLQINVVLLRMVSHSHKNVSQEYLDTFYKSFDQISHRKFDGLIITGAPVETLDFEQVDYWEELKEVMDWSKKNVFSTLHICWGAQAGLYYHYGINKYHVSKKIFGVFEHSVSCEDSPLVRGFDDTFWVPHSRHTQIKREDIEPIKELMILSESKKAGVYLVERKDGRQVFVTGHPEYDPEVLKKEYYRDLKKGMDIDIPVNYFPHDDPEKRPVVRWRSHAYILFNNWLNYYVYQQTPYNLDNIDQAIL.

Cysteine 142 (acyl-thioester intermediate) is an active-site residue. Lysine 163 and serine 192 together coordinate substrate. Histidine 235 functions as the Proton acceptor in the catalytic mechanism. Residue glutamate 237 is part of the active site. Arginine 249 is a substrate binding site.

It belongs to the MetA family.

Its subcellular location is the cytoplasm. The enzyme catalyses L-homoserine + acetyl-CoA = O-acetyl-L-homoserine + CoA. Its pathway is amino-acid biosynthesis; L-methionine biosynthesis via de novo pathway; O-acetyl-L-homoserine from L-homoserine: step 1/1. Functionally, transfers an acetyl group from acetyl-CoA to L-homoserine, forming acetyl-L-homoserine. This chain is Homoserine O-acetyltransferase, found in Petrotoga mobilis (strain DSM 10674 / SJ95).